The following is a 134-amino-acid chain: D-ribose pyranase (134 aa).

The active-site Proton donor is the His20. Residues Asp28, His99, and 123 to 125 each bind substrate; that span reads YSN.

The protein belongs to the RbsD / FucU family. RbsD subfamily. As to quaternary structure, homodecamer.

It localises to the cytoplasm. It catalyses the reaction beta-D-ribopyranose = beta-D-ribofuranose. Its pathway is carbohydrate metabolism; D-ribose degradation; D-ribose 5-phosphate from beta-D-ribopyranose: step 1/2. Catalyzes the interconversion of beta-pyran and beta-furan forms of D-ribose. The polypeptide is D-ribose pyranase (Staphylococcus aureus (strain Mu3 / ATCC 700698)).